We begin with the raw amino-acid sequence, 546 residues long: CTP synthase (546 aa).

Positions 1–269 are amidoligase domain; that stretch reads MNSNTKIIFV…DAKLVELLNL (269 aa). Residue serine 16 coordinates CTP. Residue serine 16 participates in UTP binding. Residues 17 to 22 and aspartate 74 contribute to the ATP site; that span reads SLGKGV. The Mg(2+) site is built by aspartate 74 and glutamate 143. Residues 150 to 152, 190 to 195, and lysine 226 contribute to the CTP site; these read DIE and KTKPTQ. Residues 190–195 and lysine 226 contribute to the UTP site; that span reads KTKPTQ. The Glutamine amidotransferase type-1 domain maps to 294 to 546; sequence IIAMVGKYVS…IQAAIENSNN (253 aa). L-glutamine is bound at residue glycine 356. Cysteine 383 acts as the Nucleophile; for glutamine hydrolysis in catalysis. L-glutamine-binding positions include 384–387, glutamate 407, and arginine 474; that span reads LGMQ. Catalysis depends on residues histidine 519 and glutamate 521.

The protein belongs to the CTP synthase family. In terms of assembly, homotetramer.

The enzyme catalyses UTP + L-glutamine + ATP + H2O = CTP + L-glutamate + ADP + phosphate + 2 H(+). The catalysed reaction is L-glutamine + H2O = L-glutamate + NH4(+). It carries out the reaction UTP + NH4(+) + ATP = CTP + ADP + phosphate + 2 H(+). It participates in pyrimidine metabolism; CTP biosynthesis via de novo pathway; CTP from UDP: step 2/2. Its activity is regulated as follows. Allosterically activated by GTP, when glutamine is the substrate; GTP has no effect on the reaction when ammonia is the substrate. The allosteric effector GTP functions by stabilizing the protein conformation that binds the tetrahedral intermediate(s) formed during glutamine hydrolysis. Inhibited by the product CTP, via allosteric rather than competitive inhibition. In terms of biological role, catalyzes the ATP-dependent amination of UTP to CTP with either L-glutamine or ammonia as the source of nitrogen. Regulates intracellular CTP levels through interactions with the four ribonucleotide triphosphates. The polypeptide is CTP synthase (Francisella tularensis subsp. holarctica (strain FTNF002-00 / FTA)).